The sequence spans 227 residues: NAD(P)H-quinone oxidoreductase subunit K, chloroplastic (227 aa).

Positions 43, 44, 108, and 139 each coordinate [4Fe-4S] cluster.

This sequence belongs to the complex I 20 kDa subunit family. As to quaternary structure, NDH is composed of at least 16 different subunits, 5 of which are encoded in the nucleus. [4Fe-4S] cluster serves as cofactor.

It is found in the plastid. The protein resides in the chloroplast thylakoid membrane. It carries out the reaction a plastoquinone + NADH + (n+1) H(+)(in) = a plastoquinol + NAD(+) + n H(+)(out). It catalyses the reaction a plastoquinone + NADPH + (n+1) H(+)(in) = a plastoquinol + NADP(+) + n H(+)(out). Functionally, NDH shuttles electrons from NAD(P)H:plastoquinone, via FMN and iron-sulfur (Fe-S) centers, to quinones in the photosynthetic chain and possibly in a chloroplast respiratory chain. The immediate electron acceptor for the enzyme in this species is believed to be plastoquinone. Couples the redox reaction to proton translocation, and thus conserves the redox energy in a proton gradient. The sequence is that of NAD(P)H-quinone oxidoreductase subunit K, chloroplastic from Drimys granadensis.